The primary structure comprises 389 residues: Aspartic protease 6 (389 aa).

A signal peptide spans 1 to 15 (MKTFILLAVLGLASA). Residues 71 to 384 (YLGNITIGTP…DIGNKRMGFA (314 aa)) form the Peptidase A1 domain. N-linked (GlcNAc...) asparagine glycosylation occurs at asparagine 74. Aspartate 89 is a catalytic residue. A disulfide bridge links cysteine 102 with cysteine 106. Aspartate 277 is a catalytic residue. Cysteine 312 and cysteine 344 are joined by a disulfide.

This sequence belongs to the peptidase A1 family. Glycosylated. Has phosphorylcholine-substituted oligosaccharide N-glycans. As to expression, expressed in intestine, muscles, pharynx and hypodermis.

It is found in the secreted. Its function is as follows. Aspartic protease. The protein is Aspartic protease 6 of Caenorhabditis elegans.